The primary structure comprises 417 residues: Gamma-glutamyl phosphate reductase (417 aa).

Belongs to the gamma-glutamyl phosphate reductase family.

It localises to the cytoplasm. The enzyme catalyses L-glutamate 5-semialdehyde + phosphate + NADP(+) = L-glutamyl 5-phosphate + NADPH + H(+). It functions in the pathway amino-acid biosynthesis; L-proline biosynthesis; L-glutamate 5-semialdehyde from L-glutamate: step 2/2. In terms of biological role, catalyzes the NADPH-dependent reduction of L-glutamate 5-phosphate into L-glutamate 5-semialdehyde and phosphate. The product spontaneously undergoes cyclization to form 1-pyrroline-5-carboxylate. This is Gamma-glutamyl phosphate reductase from Escherichia coli O45:K1 (strain S88 / ExPEC).